The chain runs to 424 residues: Enolase (424 aa).

(2R)-2-phosphoglycerate is bound at residue Gln162. Residue Glu204 is the Proton donor of the active site. Positions 241, 284, and 311 each coordinate Mg(2+). The (2R)-2-phosphoglycerate site is built by Lys336, Arg365, Ser366, and Lys387. The Proton acceptor role is filled by Lys336.

This sequence belongs to the enolase family. The cofactor is Mg(2+).

Its subcellular location is the cytoplasm. The protein localises to the secreted. It localises to the cell surface. It carries out the reaction (2R)-2-phosphoglycerate = phosphoenolpyruvate + H2O. Its pathway is carbohydrate degradation; glycolysis; pyruvate from D-glyceraldehyde 3-phosphate: step 4/5. Its function is as follows. Catalyzes the reversible conversion of 2-phosphoglycerate (2-PG) into phosphoenolpyruvate (PEP). It is essential for the degradation of carbohydrates via glycolysis. The sequence is that of Enolase from Mesorhizobium japonicum (strain LMG 29417 / CECT 9101 / MAFF 303099) (Mesorhizobium loti (strain MAFF 303099)).